The chain runs to 485 residues: Endo-1,4-beta-xylanase C (485 aa).

An N-terminal signal peptide occupies residues 1–19 (MKFLQIIPVLLSLTSTTLA). The 201-residue stretch at 34–234 (KETGNKVGTI…GNGGVSGTAD (201 aa)) folds into the GH11 domain. N-linked (GlcNAc...) asparagine glycans are attached at residues Asn56 and Asn107. The Nucleophile role is filled by Glu128. N-linked (GlcNAc...) asparagine glycosylation is present at Asn175. The active-site Proton donor is Glu221. The interval 250 to 450 (ASPAPAGGAP…PQNASDGGNC (201 aa)) is disordered. Low complexity-rich tracts occupy residues 265-330 (AGND…QGQH) and 344-354 (GSDFNNWSQGG). 7 consecutive repeat copies span residues 275 to 280 (GQQPPQ), 281 to 286 (GQQPPQ), 287 to 292 (GQQPPQ), 293 to 298 (GQQPPQ), 299 to 304 (GQQPPQ), 310 to 315 (GQQPPQ), and 316 to 321 (GQQPPQ). Positions 275–321 (GQQPPQGQQPPQGQQPPQGQQPPQGQQPPQGNDQQGQQPPQGQQPPQ) are 7 X 6 AA tandem repeats of G-Q-Q-P-P-Q. Asn349 carries an N-linked (GlcNAc...) asparagine glycan. A run of 8 repeats spans residues 353 to 361 (GGSPWGGNQ), 362 to 370 (GGSPWGGNQ), 371 to 379 (GGNPWGGNQ), 380 to 388 (GGSPWGGNQ), 389 to 397 (GGSPWGQGN), 399 to 407 (GGNPWGGNQ), 408 to 416 (GGSPWGGNQ), and 417 to 425 (GGNPWGGNQ). Residues 353–425 (GGSPWGGNQG…QGGNPWGGNQ (73 aa)) are 8 X 9 AA tandem repeats of G-G-[SN]-P-W-G-G-N-Q. Gly residues predominate over residues 355–425 (SPWGGNQGGS…QGGNPWGGNQ (71 aa)). Positions 426–445 (WGAPQNAAAPQSAAAPQNAS) are enriched in low complexity. N-linked (GlcNAc...) asparagine glycosylation occurs at Asn443. Positions 449–484 (NCASLWGQCGGQGYNGPSCCSEGSCKPINEYFHQCQ) constitute a CBM1 domain.

Belongs to the glycosyl hydrolase 11 (cellulase G) family.

It localises to the secreted. The enzyme catalyses Endohydrolysis of (1-&gt;4)-beta-D-xylosidic linkages in xylans.. The protein operates within glycan degradation; xylan degradation. Functionally, endo-1,4-beta-xylanase involved in the hydrolysis of xylan, a major structural heterogeneous polysaccharide found in plant biomass representing the second most abundant polysaccharide in the biosphere, after cellulose. The polypeptide is Endo-1,4-beta-xylanase C (xynC) (Neocallimastix patriciarum (Rumen fungus)).